Here is a 311-residue protein sequence, read N- to C-terminus: Glutaminase (311 aa).

7 residues coordinate substrate: S69, N120, E164, N171, Y195, Y247, and V265.

Belongs to the glutaminase family. As to quaternary structure, homotetramer.

The catalysed reaction is L-glutamine + H2O = L-glutamate + NH4(+). The sequence is that of Glutaminase from Colwellia psychrerythraea (strain 34H / ATCC BAA-681) (Vibrio psychroerythus).